The primary structure comprises 133 residues: Large ribosomal subunit protein bL19 (133 aa).

It belongs to the bacterial ribosomal protein bL19 family.

Functionally, this protein is located at the 30S-50S ribosomal subunit interface and may play a role in the structure and function of the aminoacyl-tRNA binding site. The protein is Large ribosomal subunit protein bL19 of Stenotrophomonas maltophilia (strain K279a).